Consider the following 398-residue polypeptide: MQKRLTLLGSTGSIGDSTLDVVARHPERFSVYALTAHRNGDKLVEQCLRFAPEVAVVGDAATAAHVDAKLRAAGSKTTVLHGPQALVDVSKSDGCDTVVAAIVGAAGMAPSLAAARAGKRILLANKEALVMSGAIFMDAVRDHGAILLPVDSEHNAIFQCMPRDAAEHGGISKIILTASGGPFRTREPATLVDVTPDEACKHPNWVMGRKISVDSATMMNKGLEVIEAHWIFGLPGDRIDVLIHPQSVIHSLVSYRDGSVLAQLGNPDMRTPIAYALAFPERVDAGVDQLDLAQIAQLSFEKPDYARFPCLALALKALEEGGIASAALNAANEVAVEAFLERRIGFMAIAATVDAVLNTLPNRTPDGLEDVLAADAEARRLAAEIIAKAPAPRVERTV.

NADPH contacts are provided by Thr-11, Gly-12, Ser-13, Ile-14, Arg-38, Asn-39, and Asn-125. Residue Lys-126 participates in 1-deoxy-D-xylulose 5-phosphate binding. An NADPH-binding site is contributed by Glu-127. Asp-151 is a binding site for Mn(2+). Residues Ser-152, Glu-153, Ser-179, and His-202 each contribute to the 1-deoxy-D-xylulose 5-phosphate site. Position 153 (Glu-153) interacts with Mn(2+). Residue Gly-208 participates in NADPH binding. 1-deoxy-D-xylulose 5-phosphate is bound by residues Ser-215, Asn-220, Lys-221, and Glu-224. Glu-224 lines the Mn(2+) pocket.

This sequence belongs to the DXR family. The cofactor is Mg(2+). Requires Mn(2+) as cofactor.

The catalysed reaction is 2-C-methyl-D-erythritol 4-phosphate + NADP(+) = 1-deoxy-D-xylulose 5-phosphate + NADPH + H(+). It functions in the pathway isoprenoid biosynthesis; isopentenyl diphosphate biosynthesis via DXP pathway; isopentenyl diphosphate from 1-deoxy-D-xylulose 5-phosphate: step 1/6. Its function is as follows. Catalyzes the NADPH-dependent rearrangement and reduction of 1-deoxy-D-xylulose-5-phosphate (DXP) to 2-C-methyl-D-erythritol 4-phosphate (MEP). The sequence is that of 1-deoxy-D-xylulose 5-phosphate reductoisomerase from Burkholderia lata (strain ATCC 17760 / DSM 23089 / LMG 22485 / NCIMB 9086 / R18194 / 383).